The primary structure comprises 413 residues: Monacolin J acid methylbutanoyltransferase (413 aa).

Arg-73 serves as a coordination point for monacolin J. Residue Ser-76 is the Acyl-ester intermediate of the active site. Residues Arg-173, Tyr-188, and Tyr-258 each contribute to the monacolin J site. Gly-366 is a binding site for 2-methylbutanoate. Glu-388 and Trp-390 together coordinate monacolin J.

Belongs to the class-A beta-lactamase family. As to quaternary structure, interacts with LovF.

The catalysed reaction is monacolin J carboxylate + (S)-2-methylbutanoyl-[2-methylbutanoate polyketide synthase] = lovastatin carboxylate + holo-[2-methylbutanoate polyketide synthase]. It participates in polyketide biosynthesis; lovastatin biosynthesis. Functionally, monacolin J acid methylbutanoyltransferase; part of the gene cluster that mediates the biosynthesis of lovastatin (also known as mevinolin, mevacor or monacolin K), a hypolipidemic inhibitor of (3S)-hydroxymethylglutaryl-coenzyme A (HMG-CoA) reductase (HMGR). The first step in the biosynthesis of lovastatin is the production of dihydromonacolin L acid by the lovastatin nonaketide synthase lovB and the trans-acting enoyl reductase lovC via condensation of one acetyl-CoA unit and 8 malonyl-CoA units. Dihydromonacolin L acid is released from lovB by the thioesterase lovG. Next, dihydromonacolin L acid is oxidized by the dihydromonacolin L monooxygenase lovA twice to form monacolin J acid. The 2-methylbutyrate moiety of lovastatin is synthesized by the lovastatin diketide synthase lovF via condensation of one acetyl-CoA unit and one malonyl-CoA unit. Finally, the covalent attachment of this moiety to monacolin J acid is catalyzed by the transesterase lovD to yield lovastatin. LovD has broad substrate specificity and can also convert monacolin J to simvastatin using alpha-dimethylbutanoyl-S-methyl-3-mercaptopropionate (DMB-S-MMP) as the thioester acyl donor, and can also catalyze the reverse reaction and function as hydrolase in vitro. LovD has much higher activity with LovF-bound 2-methylbutanoate than with free diketide substrates. In Aspergillus terreus, this protein is Monacolin J acid methylbutanoyltransferase.